The primary structure comprises 211 residues: Superoxide dismutase [Mn], mitochondrial (211 aa).

A mitochondrion-targeting transit peptide spans 1–24; it reads MLCRAVCSASRRLAPALGILGVRQ. His50 contacts Mn(2+). Residue Tyr58 is modified to 3'-nitrotyrosine. An N6-acetyllysine; alternate mark is found at Lys68 and Lys75. Lys68 and Lys75 each carry N6-succinyllysine; alternate. Residue His98 participates in Mn(2+) binding. Lys114 is modified (N6-acetyllysine). Residues Lys122 and Lys130 each carry the N6-acetyllysine; alternate modification. N6-succinyllysine; alternate is present on residues Lys122 and Lys130. Mn(2+)-binding residues include Asp183 and His187. Residue Lys202 is modified to N6-acetyllysine.

The protein belongs to the iron/manganese superoxide dismutase family. Homotetramer. Requires Mn(2+) as cofactor. In terms of processing, nitrated under oxidative stress. Nitration coupled with oxidation inhibits the catalytic activity. Post-translationally, acetylation at Lys-122 decreases enzymatic activity. Deacetylated by SIRT3 upon exposure to ionizing radiations or after long fasting. Polyubiquitinated; leading to proteasomal degradation. Deubiquitinated by USP36 which increases protein stability.

It localises to the mitochondrion matrix. The catalysed reaction is 2 superoxide + 2 H(+) = H2O2 + O2. Functionally, destroys superoxide anion radicals which are normally produced within the cells and which are toxic to biological systems. This Cavia porcellus (Guinea pig) protein is Superoxide dismutase [Mn], mitochondrial (SOD2).